Consider the following 310-residue polypeptide: Methionyl-tRNA formyltransferase (310 aa).

111 to 114 (SLLP) contacts (6S)-5,6,7,8-tetrahydrofolate.

The protein belongs to the Fmt family.

It carries out the reaction L-methionyl-tRNA(fMet) + (6R)-10-formyltetrahydrofolate = N-formyl-L-methionyl-tRNA(fMet) + (6S)-5,6,7,8-tetrahydrofolate + H(+). Attaches a formyl group to the free amino group of methionyl-tRNA(fMet). The formyl group appears to play a dual role in the initiator identity of N-formylmethionyl-tRNA by promoting its recognition by IF2 and preventing the misappropriation of this tRNA by the elongation apparatus. In Rhodopseudomonas palustris (strain ATCC BAA-98 / CGA009), this protein is Methionyl-tRNA formyltransferase.